A 234-amino-acid chain; its full sequence is Sugar fermentation stimulation protein A (234 aa).

A DNA-binding region (H-T-H motif) is located at residues 201 to 220 (LLSEAQNKGVEVLAYKAELS).

The protein belongs to the SfsA family.

In terms of biological role, binds to DNA non-specifically. Could be a regulatory factor involved in maltose metabolism. This is Sugar fermentation stimulation protein A from Salmonella typhi.